Consider the following 443-residue polypeptide: Ribosomal protein uS12 methylthiotransferase RimO (443 aa).

The MTTase N-terminal domain occupies 5-115 (PNIGFISLGC…VMKHVHKYVP (111 aa)). [4Fe-4S] cluster contacts are provided by Cys-14, Cys-50, Cys-79, Cys-147, Cys-151, and Cys-154. The Radical SAM core domain occupies 133–374 (LTPKHYAYLK…MQLQQKISAE (242 aa)). The region spanning 377–443 (RQKIGRTLSV…ADEYDLWGEI (67 aa)) is the TRAM domain.

Belongs to the methylthiotransferase family. RimO subfamily. It depends on [4Fe-4S] cluster as a cofactor.

It localises to the cytoplasm. The catalysed reaction is L-aspartate(89)-[ribosomal protein uS12]-hydrogen + (sulfur carrier)-SH + AH2 + 2 S-adenosyl-L-methionine = 3-methylsulfanyl-L-aspartate(89)-[ribosomal protein uS12]-hydrogen + (sulfur carrier)-H + 5'-deoxyadenosine + L-methionine + A + S-adenosyl-L-homocysteine + 2 H(+). Catalyzes the methylthiolation of an aspartic acid residue of ribosomal protein uS12. The sequence is that of Ribosomal protein uS12 methylthiotransferase RimO from Histophilus somni (strain 2336) (Haemophilus somnus).